The chain runs to 231 residues: Large ribosomal subunit protein uL1 (231 aa).

This sequence belongs to the universal ribosomal protein uL1 family. Part of the 50S ribosomal subunit.

Binds directly to 23S rRNA. The L1 stalk is quite mobile in the ribosome, and is involved in E site tRNA release. Functionally, protein L1 is also a translational repressor protein, it controls the translation of the L11 operon by binding to its mRNA. The protein is Large ribosomal subunit protein uL1 of Thioalkalivibrio sulfidiphilus (strain HL-EbGR7).